A 736-amino-acid polypeptide reads, in one-letter code: Phosphoribosylformylglycinamidine synthase subunit PurL (736 aa).

Residue histidine 48 is part of the active site. ATP is bound by residues tyrosine 51 and lysine 90. Position 92 (glutamate 92) interacts with Mg(2+). Residues 93–96 (SHNH) and arginine 115 contribute to the substrate site. The active-site Proton acceptor is the histidine 94. Aspartate 116 contributes to the Mg(2+) binding site. Glutamine 239 contributes to the substrate binding site. Aspartate 267 lines the Mg(2+) pocket. 311 to 313 (ESQ) serves as a coordination point for substrate. Residues aspartate 492 and glycine 529 each coordinate ATP. Mg(2+) is bound at residue asparagine 530. A substrate-binding site is contributed by serine 532.

The protein belongs to the FGAMS family. In terms of assembly, monomer. Part of the FGAM synthase complex composed of 1 PurL, 1 PurQ and 2 PurS subunits.

It localises to the cytoplasm. It catalyses the reaction N(2)-formyl-N(1)-(5-phospho-beta-D-ribosyl)glycinamide + L-glutamine + ATP + H2O = 2-formamido-N(1)-(5-O-phospho-beta-D-ribosyl)acetamidine + L-glutamate + ADP + phosphate + H(+). It participates in purine metabolism; IMP biosynthesis via de novo pathway; 5-amino-1-(5-phospho-D-ribosyl)imidazole from N(2)-formyl-N(1)-(5-phospho-D-ribosyl)glycinamide: step 1/2. Part of the phosphoribosylformylglycinamidine synthase complex involved in the purines biosynthetic pathway. Catalyzes the ATP-dependent conversion of formylglycinamide ribonucleotide (FGAR) and glutamine to yield formylglycinamidine ribonucleotide (FGAM) and glutamate. The FGAM synthase complex is composed of three subunits. PurQ produces an ammonia molecule by converting glutamine to glutamate. PurL transfers the ammonia molecule to FGAR to form FGAM in an ATP-dependent manner. PurS interacts with PurQ and PurL and is thought to assist in the transfer of the ammonia molecule from PurQ to PurL. The sequence is that of Phosphoribosylformylglycinamidine synthase subunit PurL from Bradyrhizobium diazoefficiens (strain JCM 10833 / BCRC 13528 / IAM 13628 / NBRC 14792 / USDA 110).